The following is a 207-amino-acid chain: dITP/XTP pyrophosphatase (207 aa).

8 to 13 (TNNKNK) is a binding site for substrate. The active-site Proton acceptor is the Asp72. Asp72 lines the Mg(2+) pocket. Residues Ser73, 157–160 (FGYD), Lys180, and 185–186 (HR) each bind substrate.

Belongs to the HAM1 NTPase family. As to quaternary structure, homodimer. It depends on Mg(2+) as a cofactor.

The enzyme catalyses XTP + H2O = XMP + diphosphate + H(+). It catalyses the reaction dITP + H2O = dIMP + diphosphate + H(+). It carries out the reaction ITP + H2O = IMP + diphosphate + H(+). Its function is as follows. Pyrophosphatase that catalyzes the hydrolysis of nucleoside triphosphates to their monophosphate derivatives, with a high preference for the non-canonical purine nucleotides XTP (xanthosine triphosphate), dITP (deoxyinosine triphosphate) and ITP. Seems to function as a house-cleaning enzyme that removes non-canonical purine nucleotides from the nucleotide pool, thus preventing their incorporation into DNA/RNA and avoiding chromosomal lesions. This is dITP/XTP pyrophosphatase from Lactobacillus johnsonii (strain CNCM I-12250 / La1 / NCC 533).